The following is a 202-amino-acid chain: Histone chaperone ASF1B (202 aa).

Residues 1–156 are interaction with histone H3 and CHAF1B; it reads MAKVSVLNVA…TRFHINWDNN (156 aa). Ser-198 bears the Phosphoserine; by TLK2 mark.

This sequence belongs to the ASF1 family. In terms of assembly, interacts with histone H3 (via C-terminus), including histone H3.1, H3.2 and H3.3, and histone H4; the interaction with H3 is direct. Interacts with the CHAF1A, CHAF1B and RBBP4 subunits of the CAF-1 complex. Interacts with HAT1, NASP and TAF1. Found in a soluble complex with NASP and histones H3 and H4; the interaction with NASP is probably indirect and mediated by H3-H4. Interacts with CDAN1. Found in a cytosolic complex with CDAN1, ASF1A, IPO4 and histones H3.1 and H4. Interacts with CREBBP. Post-translationally, phosphorylated by TLK1 and TLK2.

The protein resides in the nucleus. Its subcellular location is the cytoplasm. It localises to the cytosol. In terms of biological role, histone chaperone that facilitates histone deposition and histone exchange and removal during nucleosome assembly and disassembly. Cooperates with chromatin assembly factor 1 (CAF-1) to promote replication-dependent chromatin assembly. Also involved in the nuclear import of the histone H3-H4 dimer together with importin-4 (IPO4): specifically recognizes and binds newly synthesized histones with the monomethylation of H3 'Lys-9' (H3K9me1) and diacetylation at 'Lys-5' and 'Lys-12' of H4 (H4K5ac and H4K12ac) marks in the cytosol. Does not participate in replication-independent nucleosome deposition which is mediated by ASF1A and HIRA. Required for gonad development. The chain is Histone chaperone ASF1B (ASF1B) from Bos taurus (Bovine).